The primary structure comprises 542 residues: Phosphoenolpyruvate carboxykinase (ATP) (542 aa).

Substrate is bound by residues arginine 67, tyrosine 208, and lysine 214. Residues lysine 214, histidine 233, and 249-257 (GLSGTGKTT) each bind ATP. Mn(2+)-binding residues include lysine 214 and histidine 233. Aspartate 270 contributes to the Mn(2+) binding site. ATP-binding positions include glutamate 298, arginine 334, 450–451 (RI), and threonine 456. Arginine 334 contributes to the substrate binding site.

It belongs to the phosphoenolpyruvate carboxykinase (ATP) family. In terms of assembly, monomer. Mn(2+) is required as a cofactor.

The protein resides in the cytoplasm. It carries out the reaction oxaloacetate + ATP = phosphoenolpyruvate + ADP + CO2. Its pathway is carbohydrate biosynthesis; gluconeogenesis. In terms of biological role, involved in the gluconeogenesis. Catalyzes the conversion of oxaloacetate (OAA) to phosphoenolpyruvate (PEP) through direct phosphoryl transfer between the nucleoside triphosphate and OAA. This chain is Phosphoenolpyruvate carboxykinase (ATP), found in Vibrio cholerae serotype O1 (strain ATCC 39541 / Classical Ogawa 395 / O395).